The following is a 232-amino-acid chain: Uridylate kinase (232 aa).

13 to 14 contributes to the ATP binding site; the sequence is GS. Glycine 52 provides a ligand contact to UMP. Glycine 53 and arginine 57 together coordinate ATP. Residues aspartate 74 and 122 to 128 each bind UMP; that span reads LQPGQST. Residues threonine 147, tyrosine 153, and aspartate 156 each coordinate ATP.

The protein belongs to the UMP kinase family. Homohexamer.

It is found in the cytoplasm. It carries out the reaction UMP + ATP = UDP + ADP. It participates in pyrimidine metabolism; CTP biosynthesis via de novo pathway; UDP from UMP (UMPK route): step 1/1. With respect to regulation, inhibited by UTP. Its function is as follows. Catalyzes the reversible phosphorylation of UMP to UDP. The sequence is that of Uridylate kinase from Thermofilum pendens (strain DSM 2475 / Hrk 5).